The following is a 120-amino-acid chain: Large ribosomal subunit protein bL12 (120 aa).

Belongs to the bacterial ribosomal protein bL12 family. In terms of assembly, homodimer. Part of the ribosomal stalk of the 50S ribosomal subunit. Forms a multimeric L10(L12)X complex, where L10 forms an elongated spine to which 2 to 4 L12 dimers bind in a sequential fashion. Binds GTP-bound translation factors.

Functionally, forms part of the ribosomal stalk which helps the ribosome interact with GTP-bound translation factors. Is thus essential for accurate translation. This is Large ribosomal subunit protein bL12 from Pseudoalteromonas translucida (strain TAC 125).